The sequence spans 207 residues: Glycerol-3-phosphate acyltransferase (207 aa).

5 helical membrane passes run 2–22, 47–67, 72–92, 121–141, and 155–175; these read ILVL…GVVI, MLGP…GTLA, ILFG…AVFG, FFVI…MVSV, and LVYH…VFLI.

The protein belongs to the PlsY family. In terms of assembly, probably interacts with PlsX.

It localises to the cell membrane. The catalysed reaction is an acyl phosphate + sn-glycerol 3-phosphate = a 1-acyl-sn-glycero-3-phosphate + phosphate. Its pathway is lipid metabolism; phospholipid metabolism. Functionally, catalyzes the transfer of an acyl group from acyl-phosphate (acyl-PO(4)) to glycerol-3-phosphate (G3P) to form lysophosphatidic acid (LPA). This enzyme utilizes acyl-phosphate as fatty acyl donor, but not acyl-CoA or acyl-ACP. The chain is Glycerol-3-phosphate acyltransferase from Lacticaseibacillus casei (strain BL23) (Lactobacillus casei).